Here is a 296-residue protein sequence, read N- to C-terminus: MKASTVIRFPFSVRRSVWLNKYSTFRIGGPANYFKVVHSASEAQQVIQFLHSHNYPFIIVGKGSNCLFDDRGFDGFVLCNGIQGKEFVSETTIKVYSGTSFSFLGKTLSSSGYSGLEFAVGIPGSVGGAVFMNAGIGNQDTAAVIESVEVINSKGEILSYNTEELGFGYRTSRFQHCNEFILSATFRLSRNSSSVKIAKDLLRNRLLSQPYQQPSTGCIFRNPPGNSAGKLIDEAGLKGFSLGGAQISPKHANFIVNTGRATSQEVKQLIQIVQDKLKSQGINLEEEVRIIPYQLP.

Residues 26 to 191 form the FAD-binding PCMH-type domain; sequence RIGGPANYFK…LSATFRLSRN (166 aa). The active site involves Arg-170. Cys-218 acts as the Proton donor in catalysis. Residue Glu-287 is part of the active site.

The protein belongs to the MurB family. FAD serves as cofactor.

Its subcellular location is the cytoplasm. It carries out the reaction UDP-N-acetyl-alpha-D-muramate + NADP(+) = UDP-N-acetyl-3-O-(1-carboxyvinyl)-alpha-D-glucosamine + NADPH + H(+). The protein operates within cell wall biogenesis; peptidoglycan biosynthesis. Cell wall formation. The polypeptide is UDP-N-acetylenolpyruvoylglucosamine reductase (Chlamydia abortus (strain DSM 27085 / S26/3) (Chlamydophila abortus)).